Here is a 399-residue protein sequence, read N- to C-terminus: Succinate--CoA ligase [ADP-forming] subunit beta (399 aa).

The region spanning 9-254 (KAVLQPFGVS…TTEEDAKEIE (246 aa)) is the ATP-grasp domain. Residues Lys46, 53–55 (GRG), Glu109, Ser112, and Glu117 contribute to the ATP site. Residues Asn209 and Asp223 each coordinate Mg(2+). Residues Asn274 and 331-333 (GIM) each bind substrate.

This sequence belongs to the succinate/malate CoA ligase beta subunit family. In terms of assembly, heterotetramer of two alpha and two beta subunits. Mg(2+) is required as a cofactor.

The enzyme catalyses succinate + ATP + CoA = succinyl-CoA + ADP + phosphate. It carries out the reaction GTP + succinate + CoA = succinyl-CoA + GDP + phosphate. It functions in the pathway carbohydrate metabolism; tricarboxylic acid cycle; succinate from succinyl-CoA (ligase route): step 1/1. Functionally, succinyl-CoA synthetase functions in the citric acid cycle (TCA), coupling the hydrolysis of succinyl-CoA to the synthesis of either ATP or GTP and thus represents the only step of substrate-level phosphorylation in the TCA. The beta subunit provides nucleotide specificity of the enzyme and binds the substrate succinate, while the binding sites for coenzyme A and phosphate are found in the alpha subunit. This chain is Succinate--CoA ligase [ADP-forming] subunit beta, found in Rhodopseudomonas palustris (strain BisA53).